Here is a 621-residue protein sequence, read N- to C-terminus: UvrABC system protein C (621 aa).

The GIY-YIG domain maps to 11-90 (TTPGVYLYKD…IKKHRPRYNI (80 aa)). Residues 200-235 (KELVELLQKDMLYASEALEFEKAATLRDQIQAIKHT) form the UVR domain.

The protein belongs to the UvrC family. In terms of assembly, interacts with UvrB in an incision complex.

It is found in the cytoplasm. Functionally, the UvrABC repair system catalyzes the recognition and processing of DNA lesions. UvrC both incises the 5' and 3' sides of the lesion. The N-terminal half is responsible for the 3' incision and the C-terminal half is responsible for the 5' incision. The protein is UvrABC system protein C of Lawsonia intracellularis (strain PHE/MN1-00).